The primary structure comprises 837 residues: PE-PGRS family protein PE_PGRS4 (837 aa).

The PE domain occupies 4–94 (VIAAPEVIAA…GAYAAAEAAA (91 aa)). A compositionally biased stretch (gly residues) spans 811 to 825 (NGGKAGGTPGAGGTS). Positions 811–837 (NGGKAGGTPGAGGTSGLIIGENGLNGL) are disordered. The span at 826 to 837 (GLIIGENGLNGL) shows a compositional bias: low complexity.

It belongs to the mycobacterial PE family. PGRS subfamily.

The polypeptide is PE-PGRS family protein PE_PGRS4 (Mycobacterium tuberculosis (strain ATCC 25618 / H37Rv)).